A 248-amino-acid polypeptide reads, in one-letter code: ATP synthase subunit a (248 aa).

5 helical membrane passes run Gly-31–Gly-51, Val-90–Phe-110, Ile-129–Ser-149, Val-195–Phe-215, and Leu-216–Glu-236.

It belongs to the ATPase A chain family. As to quaternary structure, F-type ATPases have 2 components, CF(1) - the catalytic core - and CF(0) - the membrane proton channel. CF(1) has five subunits: alpha(3), beta(3), gamma(1), delta(1), epsilon(1). CF(0) has four main subunits: a, b, b' and c.

It is found in the cellular thylakoid membrane. In terms of biological role, key component of the proton channel; it plays a direct role in the translocation of protons across the membrane. The protein is ATP synthase subunit a of Synechococcus sp. (strain JA-2-3B'a(2-13)) (Cyanobacteria bacterium Yellowstone B-Prime).